Here is a 729-residue protein sequence, read N- to C-terminus: Transketolase (729 aa).

Position 97 (histidine 97) interacts with substrate. Thiamine diphosphate contacts are provided by residues histidine 138 and glycine 186–leucine 188. Aspartate 227 lines the Mg(2+) pocket. Residues glycine 228 and asparagine 257 each coordinate thiamine diphosphate. Mg(2+) is bound by residues asparagine 257 and isoleucine 259. Substrate-binding residues include histidine 332, arginine 423, and serine 450. Histidine 332 is a binding site for thiamine diphosphate. Catalysis depends on glutamate 477, which acts as the Proton donor. Position 503 (phenylalanine 503) interacts with thiamine diphosphate. Substrate-binding residues include histidine 527, aspartate 535, and arginine 586.

It belongs to the transketolase family. In terms of assembly, homodimer. Mg(2+) serves as cofactor. Requires Ca(2+) as cofactor. Mn(2+) is required as a cofactor. The cofactor is Co(2+). It depends on thiamine diphosphate as a cofactor.

It carries out the reaction D-sedoheptulose 7-phosphate + D-glyceraldehyde 3-phosphate = aldehydo-D-ribose 5-phosphate + D-xylulose 5-phosphate. Functionally, catalyzes the transfer of a two-carbon ketol group from a ketose donor to an aldose acceptor, via a covalent intermediate with the cofactor thiamine pyrophosphate. This chain is Transketolase (tkt), found in Streptococcus pyogenes serotype M18 (strain MGAS8232).